A 948-amino-acid polypeptide reads, in one-letter code: ATPase 8, plasma membrane-type (948 aa).

Residues 1-64 lie on the Cytoplasmic side of the membrane; sequence MATEFSWDEI…EKSENKFLKF (64 aa). Residues 65–84 traverse the membrane as a helical segment; it reads LGFMWNPLSWVMESAAIMAI. The Extracellular segment spans residues 85–96; that stretch reads VLANGGGKAPDW. A helical transmembrane segment spans residues 97–117; that stretch reads QDFIGIMVLLIINSTISFIEE. Topologically, residues 118–246 are cytoplasmic; it reads NNAGNAAAAL…GHFQKVLTSI (129 aa). The chain crosses the membrane as a helical span at residues 247–267; the sequence is GNFCICSIGLGMLIEILIMYP. Residues 268-276 are Extracellular-facing; that stretch reads IQHRTYRDG. The chain crosses the membrane as a helical span at residues 277–294; the sequence is IDNLLVLLIGGIPIAMPT. The Cytoplasmic portion of the chain corresponds to 295-646; it reads VLSVTMAIGS…TSRAIFQRMK (352 aa). Residue aspartate 332 is the 4-aspartylphosphate intermediate of the active site. 2 residues coordinate Mg(2+): aspartate 591 and aspartate 595. A helical transmembrane segment spans residues 647-668; sequence NYTIYAVSITIRIVLGFMLVAL. Residues 669-673 are Extracellular-facing; it reads IWRFD. Residues 674–696 form a helical membrane-spanning segment; the sequence is FAPFMVLIIAILNDGTIMTISKD. Over 697–712 the chain is Cytoplasmic; it reads RVKPSPVPDSWKLNEI. The helical transmembrane segment at 713-733 threads the bilayer; that stretch reads FATGVVLGTYMALTTVLFFWL. The Extracellular portion of the chain corresponds to 734-754; the sequence is AHDTDFFSKTFGVRSIQGNEE. Residues 755–775 traverse the membrane as a helical segment; sequence ELMAALYLQVSIISQALIFVT. Over 776 to 787 the chain is Cytoplasmic; the sequence is RSRSWSFVERPG. Residues 788–808 traverse the membrane as a helical segment; sequence FLLLIAFVIAQLVATLIAVYA. The Extracellular portion of the chain corresponds to 809–816; it reads NWGFARIV. Residues 817 to 837 form a helical membrane-spanning segment; it reads GCGWGWAGGIWVYSIITYIPL. The Cytoplasmic segment spans residues 838–948; it reads DILKFIIRYA…IDTIQQHYTV (111 aa). Position 884 is a phosphothreonine (threonine 884). The residue at position 930 (serine 930) is a Phosphoserine. The interaction with 14-3-3 proteins stretch occupies residues 946-948; it reads YTV. Threonine 947 carries the post-translational modification Phosphothreonine.

This sequence belongs to the cation transport ATPase (P-type) (TC 3.A.3) family. Type IIIA subfamily. In terms of assembly, binds to 14-3-3 proteins. The binding is induced by phosphorylation of Thr-947. Binding to 14-3-3 proteins activates the H(+)-ATPase. In terms of tissue distribution, expressed in guard cells, roots and leaves, and barely in mesophyll cells.

The protein localises to the membrane. It catalyses the reaction ATP + H2O + H(+)(in) = ADP + phosphate + 2 H(+)(out). In terms of biological role, the plasma membrane H(+) ATPase of plants and fungi generates a proton gradient that drives the active transport of nutrients by H(+)-symport. The resulting external acidification and/or internal alkinization may mediate growth responses. The protein is ATPase 8, plasma membrane-type (AHA8) of Arabidopsis thaliana (Mouse-ear cress).